The primary structure comprises 332 residues: Biotin synthase (332 aa).

In terms of domain architecture, Radical SAM core spans H53–R282. Residues C71, C75, and C78 each coordinate [4Fe-4S] cluster. [2Fe-2S] cluster is bound by residues C115, C147, C207, and R277.

It belongs to the radical SAM superfamily. Biotin synthase family. In terms of assembly, homodimer. Requires [4Fe-4S] cluster as cofactor. [2Fe-2S] cluster serves as cofactor.

It carries out the reaction (4R,5S)-dethiobiotin + (sulfur carrier)-SH + 2 reduced [2Fe-2S]-[ferredoxin] + 2 S-adenosyl-L-methionine = (sulfur carrier)-H + biotin + 2 5'-deoxyadenosine + 2 L-methionine + 2 oxidized [2Fe-2S]-[ferredoxin]. Its pathway is cofactor biosynthesis; biotin biosynthesis; biotin from 7,8-diaminononanoate: step 2/2. Its function is as follows. Catalyzes the conversion of dethiobiotin (DTB) to biotin by the insertion of a sulfur atom into dethiobiotin via a radical-based mechanism. The chain is Biotin synthase from Bacillus cereus (strain B4264).